Here is a 208-residue protein sequence, read N- to C-terminus: Histone H1t (208 aa).

Low complexity predominate over residues 1-16; sequence MSETVPAASAGAVPAV. The segment at 1–40 is disordered; it reads MSETVPAASAGAVPAVMEKPLTKKRGKKPAGLTSASRKAP. S9 is modified (phosphoserine). The H15 domain maps to 40 to 113; it reads PNLSVSKLIT…GASGSFKLSK (74 aa). At R58 the chain carries Citrulline. The disordered stretch occupies residues 102–208; sequence GTGASGSFKL…ANIRKATSRK (107 aa). Residues 111–136 are compositionally biased toward basic residues; sequence LSKKVLPKSTRRKANKSASAKTKKLV. The residue at position 143 (S143) is a Phosphoserine. Over residues 148–157 the composition is skewed to basic residues; the sequence is KTNKRAKKPR. Phosphothreonine is present on T159. Basic residues predominate over residues 163-175; sequence KAVRSGRKAKGAK. Residues S167 and S182 each carry the phosphoserine modification. The segment covering 187–208 has biased composition (basic residues); the sequence is RATKPKLTQHHKANIRKATSRK.

It belongs to the histone H1/H5 family. In terms of processing, phosphorylated in early spermatids. Citrullination at Arg-58 (H1R54ci) by PADI4 takes place within the DNA-binding site of H1 and results in its displacement from chromatin and global chromatin decondensation, thereby promoting pluripotency and stem cell maintenance.

Testis-specific histone H1 that forms less compacted chromatin compared to other H1 histone subtypes. Formation of more relaxed chromatin may be required to promote chromatin architecture required for proper chromosome regulation during meiosis, such as homologous recombination. Histones H1 act as linkers that bind to nucleosomes and compact polynucleosomes into a higher-order chromatin configuration. This chain is Histone H1t, found in Macaca mulatta (Rhesus macaque).